The primary structure comprises 448 residues: Glutamyl-tRNA reductase (448 aa).

Substrate is bound by residues 49–52, Ser-109, 114–116, and Gln-120; these read TCNR and ETQ. Cys-50 acts as the Nucleophile in catalysis. 189–194 is an NADP(+) binding site; sequence GAGETG. The tract at residues 427 to 448 is disordered; that stretch reads PVDEVEETDATSAKAPLRALMR.

Belongs to the glutamyl-tRNA reductase family. In terms of assembly, homodimer.

The catalysed reaction is (S)-4-amino-5-oxopentanoate + tRNA(Glu) + NADP(+) = L-glutamyl-tRNA(Glu) + NADPH + H(+). Its pathway is porphyrin-containing compound metabolism; protoporphyrin-IX biosynthesis; 5-aminolevulinate from L-glutamyl-tRNA(Glu): step 1/2. Functionally, catalyzes the NADPH-dependent reduction of glutamyl-tRNA(Glu) to glutamate 1-semialdehyde (GSA). The polypeptide is Glutamyl-tRNA reductase (Exiguobacterium sp. (strain ATCC BAA-1283 / AT1b)).